A 255-amino-acid chain; its full sequence is Small ribosomal subunit protein uS2 (255 aa).

The tract at residues 226-255 (QGVSNEEVAAEQNIDLDEKEKSEETEATEE) is disordered.

It belongs to the universal ribosomal protein uS2 family.

The polypeptide is Small ribosomal subunit protein uS2 (Staphylococcus aureus (strain JH1)).